A 159-amino-acid chain; its full sequence is MRIKNSGILLLAAILLFSCDKKRVFDEYKSVGSAWHKDSVVTFDLPVLDSTKKYNLFVNLRDNNNYPFNNLFLIVAIETPSGFTKVDTLEYQMANPDGTLMGNGFTDIKESKLYYKEDVKFKGKYKVHIKQAVRESGKIPGVEALEGITDVGFRIEQKD.

The N-terminal stretch at Met1–Ser18 is a signal peptide. Residue Cys19 is the site of N-palmitoyl cysteine attachment. Cys19 carries the S-diacylglycerol cysteine lipid modification.

It is found in the cell membrane. Functionally, required for gliding motility and chitin utilization. This chain is Gliding motility lipoprotein GldH (gldH), found in Flavobacterium johnsoniae (strain ATCC 17061 / DSM 2064 / JCM 8514 / BCRC 14874 / CCUG 350202 / NBRC 14942 / NCIMB 11054 / UW101) (Cytophaga johnsonae).